The chain runs to 100 residues: Transcription elongation factor A protein-like 7 (100 aa).

The span at 1–32 shows a compositional bias: basic and acidic residues; the sequence is MQKPCKENEGKPKCSVPKREEKRPYGEFERQQ. Residues 1-34 form a disordered region; sequence MQKPCKENEGKPKCSVPKREEKRPYGEFERQQTE. The stretch at 60–88 forms a coiled coil; sequence EEMTREGDEMERCLEEIRGLRKKFRALHS.

The protein belongs to the TFS-II family. TFA subfamily. Highly expressed in normal and fetal brain tissues, and weakly expressed in uterus and ovary. Down-regulated in epithelial ovarian, cervical, prostate, breast, brain and lung cancer cell lines and in brain and ovarian tumors.

It localises to the nucleus. Functionally, plays a role in the negative regulation of NF-kappa-B signaling at the basal level by modulating transcriptional activity of NF-kappa-B on its target gene promoters. Associates with cyclin D1 promoter containing Myc E-box sequence and transcriptionally represses cyclin D1 expression. Regulates telomerase reverse transcriptase expression and telomerase activity in both ALT (alternative lengthening of telomeres)and telomerase-positive cell lines. In Homo sapiens (Human), this protein is Transcription elongation factor A protein-like 7 (TCEAL7).